The following is a 65-amino-acid chain: Large ribosomal subunit protein bL35 (65 aa).

Residues 1-10 are compositionally biased toward basic and acidic residues; sequence MPKMKTDRGA. Residues 1–24 are disordered; it reads MPKMKTDRGAAKRFKKTGSGGFKC.

Belongs to the bacterial ribosomal protein bL35 family.

In Tolumonas auensis (strain DSM 9187 / NBRC 110442 / TA 4), this protein is Large ribosomal subunit protein bL35.